We begin with the raw amino-acid sequence, 326 residues long: Malate dehydrogenase (326 aa).

11-17 contributes to the NAD(+) binding site; sequence GAAGQIG. Substrate contacts are provided by arginine 92 and arginine 98. Residues asparagine 105, glutamine 112, and 129–131 each bind NAD(+); that span reads VGN. Asparagine 131 and arginine 162 together coordinate substrate. Histidine 187 (proton acceptor) is an active-site residue.

Belongs to the LDH/MDH superfamily. MDH type 2 family.

The catalysed reaction is (S)-malate + NAD(+) = oxaloacetate + NADH + H(+). In terms of biological role, catalyzes the reversible oxidation of malate to oxaloacetate. This Chromobacterium violaceum (strain ATCC 12472 / DSM 30191 / JCM 1249 / CCUG 213 / NBRC 12614 / NCIMB 9131 / NCTC 9757 / MK) protein is Malate dehydrogenase.